We begin with the raw amino-acid sequence, 78 residues long: Conotoxin 6 (78 aa).

A signal peptide spans 1 to 22; sequence MKLTCMMIVAVLFLTAWIFITA. Residues 23–51 constitute a propeptide that is removed on maturation; that stretch reads DNSRNGIENLPRMRRHEMKNPKASKLNKR. Disulfide bonds link cysteine 53–cysteine 69, cysteine 60–cysteine 73, and cysteine 68–cysteine 77.

The protein belongs to the conotoxin O1 superfamily. In terms of tissue distribution, expressed by the venom duct.

It localises to the secreted. This Conus imperialis (Imperial cone) protein is Conotoxin 6.